The following is a 55-amino-acid chain: Large ribosomal subunit protein bL33 (55 aa).

This sequence belongs to the bacterial ribosomal protein bL33 family.

This chain is Large ribosomal subunit protein bL33, found in Baumannia cicadellinicola subsp. Homalodisca coagulata.